Here is a 734-residue protein sequence, read N- to C-terminus: Polyribonucleotide nucleotidyltransferase (734 aa).

Aspartate 503 and aspartate 509 together coordinate Mg(2+). One can recognise a KH domain in the interval 570–629 (PKLSTIQVPVDAIGMIIGKGGETIRSITEETGAQINVDDDGTVTISSPNGESAAAAIETI). The 75-residue stretch at 639–713 (GTIYMGKVKD…GKIRYALSIK (75 aa)) folds into the S1 motif domain.

Belongs to the polyribonucleotide nucleotidyltransferase family. Requires Mg(2+) as cofactor.

The protein resides in the cytoplasm. It carries out the reaction RNA(n+1) + phosphate = RNA(n) + a ribonucleoside 5'-diphosphate. In terms of biological role, involved in mRNA degradation. Catalyzes the phosphorolysis of single-stranded polyribonucleotides processively in the 3'- to 5'-direction. This is Polyribonucleotide nucleotidyltransferase from Chlorobium phaeobacteroides (strain BS1).